A 423-amino-acid polypeptide reads, in one-letter code: Protein CLP1 homolog (423 aa).

ATP is bound by residues Glu-16, Lys-57, and 119-124; that span reads DVGKST.

This sequence belongs to the Clp1 family. Clp1 subfamily.

It localises to the nucleus. Its function is as follows. Required for endonucleolytic cleavage during polyadenylation-dependent pre-mRNA 3'-end formation. The protein is Protein CLP1 homolog (cbc) of Drosophila yakuba (Fruit fly).